The sequence spans 701 residues: Polyribonucleotide nucleotidyltransferase (701 aa).

Mg(2+) contacts are provided by Asp-490 and Asp-496. The KH domain maps to 557–616 (PKVETMTIKPEKIRDVIGPGGKKINEIIDETGVKLDIEQDGTIFIGAVDQDMINRAREII). The region spanning 626 to 694 (GQVYNAKVRR…DKGRVNASHR (69 aa)) is the S1 motif domain.

This sequence belongs to the polyribonucleotide nucleotidyltransferase family. It depends on Mg(2+) as a cofactor.

The protein localises to the cytoplasm. The enzyme catalyses RNA(n+1) + phosphate = RNA(n) + a ribonucleoside 5'-diphosphate. In terms of biological role, involved in mRNA degradation. Catalyzes the phosphorolysis of single-stranded polyribonucleotides processively in the 3'- to 5'-direction. The polypeptide is Polyribonucleotide nucleotidyltransferase (Staphylococcus carnosus (strain TM300)).